The sequence spans 91 residues: Acylphosphatase (91 aa).

The 88-residue stretch at 3-90 (RVSMIVSGQV…CGYSIFTIRR (88 aa)) folds into the Acylphosphatase-like domain. Active-site residues include R18 and N36.

This sequence belongs to the acylphosphatase family.

It carries out the reaction an acyl phosphate + H2O = a carboxylate + phosphate + H(+). The sequence is that of Acylphosphatase (acyP) from Methanospirillum hungatei JF-1 (strain ATCC 27890 / DSM 864 / NBRC 100397 / JF-1).